Here is a 654-residue protein sequence, read N- to C-terminus: WD repeat-containing protein 70 (654 aa).

Disordered stretches follow at residues 1–26 and 43–175; these read MERS…VTMG and FEQT…DSHE. Basic and acidic residues predominate over residues 45 to 78; it reads QTRRTAVERSRKTLEAREKEEEMNREKELRRQNE. Over residues 99–111 the composition is skewed to low complexity; the sequence is RDTSSSESEQSSD. The segment covering 147 to 164 has biased composition (acidic residues); sequence NEEEEEAEEEEEEEEEEE. Residues 165 to 175 show a composition bias toward basic and acidic residues; that stretch reads NPVHKIPDSHE. 7 WD repeats span residues 180-219, 227-268, 281-321, 330-369, 376-415, 421-466, and 469-508; these read HGTK…ASFK, CECH…ECIK, GHTA…KQKS, GKKV…HPKF, DSGT…KPLF, PTMF…RVYE, and ITDA…QRGA. Lys-296 participates in a covalent cross-link: Glycyl lysine isopeptide (Lys-Gly) (interchain with G-Cter in SUMO2). At Lys-452 the chain carries N6-acetyllysine. Residues 540 to 565 show a composition bias toward basic and acidic residues; that stretch reads REPRQRSTRKQLEKDRLDPLKSHKPE. A disordered region spans residues 540–579; that stretch reads REPRQRSTRKQLEKDRLDPLKSHKPEPPVAGPGRGGRVGT. Thr-579 bears the Phosphothreonine mark. Residues Lys-590 and Lys-596 each participate in a glycyl lysine isopeptide (Lys-Gly) (interchain with G-Cter in SUMO2) cross-link. 2 positions are modified to phosphoserine: Ser-621 and Ser-638. The interval 630–654 is disordered; it reads KTMFAQVESDDEEAKNEPEWKKRKI. The span at 644–654 shows a compositional bias: basic and acidic residues; it reads KNEPEWKKRKI.

The protein belongs to the WD repeat GAD-1 family.

The polypeptide is WD repeat-containing protein 70 (WDR70) (Homo sapiens (Human)).